The primary structure comprises 255 residues: Phosphatidylcholine synthase (255 aa).

Residues 1–13 are Cytoplasmic-facing; it reads MNPIKPPFTLNQY. Residues 14-34 form a helical membrane-spanning segment; that stretch reads FAAWFVHVFTASAACIGVFSL. Over 35 to 42 the chain is Periplasmic; that stretch reads YKIYQHDY. The helical transmembrane segment at 43–63 threads the bilayer; it reads VFALWLMAITVFIDAVDGSLA. Residues 64–76 are Cytoplasmic-facing; the sequence is RLVHVKSVLPKID. Residues 77–97 form a helical membrane-spanning segment; it reads GALLDNIVDYLNYVITPCFFL. Topologically, residues 98–103 are periplasmic; sequence LVKPGM. The helical transmembrane segment at 104 to 124 threads the bilayer; that stretch reads LPADYVVPITAAITITSAYQF. Residues 125 to 133 are Cytoplasmic-facing; it reads CQDDAKTPD. Residues 134–154 traverse the membrane as a helical segment; that stretch reads HFFKGFPCYWNITVFYMYIFN. Residue threonine 155 is a topological domain, periplasmic. The chain crosses the membrane as a helical span at residues 156–175; it reads SMIVNTVLLSLFCVLIFIPV. Over 176 to 190 the chain is Cytoplasmic; that stretch reads KYVYPSRLDYLTESR. A helical transmembrane segment spans residues 191 to 211; that stretch reads VLKILMHCCSALYGISSFCLL. Residues 212–217 lie on the Periplasmic side of the membrane; it reads VNYPET. The helical transmembrane segment at 218–238 threads the bilayer; it reads NKLWVSLSLGYVGMYLFLSFY. The Cytoplasmic portion of the chain corresponds to 239–255; that stretch reads RTYYPMFKAKITANNKD.

Belongs to the CDP-alcohol phosphatidyltransferase class-I family. It depends on Mn(2+) as a cofactor.

Its subcellular location is the cell inner membrane. It catalyses the reaction a CDP-1,2-diacyl-sn-glycerol + choline = a 1,2-diacyl-sn-glycero-3-phosphocholine + CMP + H(+). Functionally, condenses choline with CDP-diglyceride to produce phosphatidylcholine and CMP. Affects virulence of this bacterium when there is a complete loss of phosphatidylcholine formation due to absence of both the synthase (pcs) and the methylation (pmtA) pathways. Reduced virulence results from lowered yields of bacteria within host macrophages and because of loss of high multiplicity cytotoxicity. The chain is Phosphatidylcholine synthase from Legionella pneumophila subsp. pneumophila (strain Philadelphia 1 / ATCC 33152 / DSM 7513).